Here is a 379-residue protein sequence, read N- to C-terminus: Cytochrome b (379 aa).

The next 4 helical transmembrane spans lie at 33 to 53 (FGSL…FLAM), 77 to 98 (WLIR…YLHI), 113 to 133 (WNIG…GYVL), and 178 to 198 (FFAF…IHLL). Residues His83 and His97 each coordinate heme b. His182 and His196 together coordinate heme b. Position 201 (His201) interacts with a ubiquinone. 4 helical membrane-spanning segments follow: residues 226–246 (YKDL…ALFY), 288–308 (LGGV…PILH), 320–340 (ASQL…WIGG), and 347–367 (YIII…VLNP).

This sequence belongs to the cytochrome b family. In terms of assembly, the cytochrome bc1 complex contains 3 respiratory subunits (MT-CYB, CYC1 and UQCRFS1), 2 core proteins (UQCRC1 and UQCRC2) and probably 6 low-molecular weight proteins. Heme b is required as a cofactor.

It is found in the mitochondrion inner membrane. Component of the ubiquinol-cytochrome c reductase complex (complex III or cytochrome b-c1 complex) that is part of the mitochondrial respiratory chain. The b-c1 complex mediates electron transfer from ubiquinol to cytochrome c. Contributes to the generation of a proton gradient across the mitochondrial membrane that is then used for ATP synthesis. The sequence is that of Cytochrome b (mt-cyb) from Anguilla reinhardtii (Speckled longfin eel).